Consider the following 737-residue polypeptide: ATP-dependent RNA helicase SUV3, mitochondrial (737 aa).

A mitochondrion-targeting transit peptide spans 1–25 (MALVKYSTVFFPLRSLRLFVSIKKA). A Helicase ATP-binding domain is found at 226-365 (EARKIRRHII…KSVLPLVKSI (140 aa)). 239-246 (GPTNSGKT) provides a ligand contact to ATP. Residues 390 to 546 (PIKDGIKGLR…YLKTAVTWPT (157 aa)) form the Helicase C-terminal domain.

It belongs to the helicase family. As to quaternary structure, MSU1 and SUV3 are the two components of the mitochondrial degradosome (mtEXO).

The protein resides in the mitochondrion matrix. It catalyses the reaction ATP + H2O = ADP + phosphate + H(+). In terms of biological role, required for intron-independent turnover and processing of mitochondrial RNA. It is a key control element in nuclear-mitochondrial interactions. The sequence is that of ATP-dependent RNA helicase SUV3, mitochondrial (SUV3) from Saccharomyces cerevisiae (strain ATCC 204508 / S288c) (Baker's yeast).